A 1481-amino-acid chain; its full sequence is Cystic fibrosis transmembrane conductance regulator (1481 aa).

Residues 1–77 (MQRSPLEKAS…KLINALRRCF (77 aa)) lie on the Cytoplasmic side of the membrane. The helical transmembrane segment at 78-98 (FWRFMFYGIILYLGEVTKAVQ) threads the bilayer. The ABC transmembrane type-1 1 domain maps to 81 to 365 (FMFYGIILYL…WAVQTWYDSL (285 aa)). At 99-122 (PLLLGRIIASYDPDNKAERSIAIY) the chain is on the extracellular side. A helical transmembrane segment spans residues 123–146 (LGIGLCLLFIVRTLLLHPAIFGLH). Topologically, residues 147-195 (HIGMQMRIAMFSLIYKKTLKLSSRVLDKISIGQLVSLLSNNLNKFDEGL) are cytoplasmic. Residues 196 to 216 (ALAHFVWIAPLQVTLLMGLLW) form a helical membrane-spanning segment. The Extracellular portion of the chain corresponds to 217–222 (ELLQAF). Residues 223-243 (TFCGLAFLVVLAFLQAGLGKM) form a helical membrane-spanning segment. Over 244–298 (MMKYRDQRAGKINERLVITSEIIENIQSVKAYCWEEAMEKIIENLRQTELKLTRK) the chain is Cytoplasmic. A helical transmembrane segment spans residues 299 to 319 (AAYVRYLNSSAFFFSGFFVVF). The Extracellular portion of the chain corresponds to 320–339 (LSVLPYALLKGIILRKIFTT). The chain crosses the membrane as a helical span at residues 340–358 (ISFCIVLRMAVTRQFPWAV). Topologically, residues 359–858 (QTWYDSLGAI…YLRYITVHKS (500 aa)) are cytoplasmic. ATP contacts are provided by residues tryptophan 401, 457-464 (GSTGAGKT), and glutamine 492. Residues 423–645 (NGDNNLFFSN…RPDFSSKLMG (223 aa)) enclose the ABC transporter 1 domain. Residue cysteine 523 is the site of S-palmitoyl cysteine attachment. A phosphoserine mark is found at serine 548 and serine 659. Positions 653-831 (TAERRNSIIT…EEINEEDLRD (179 aa)) are disordered R region. Serine 669 carries the phosphoserine; by PKA modification. Serine 685 bears the Phosphoserine mark. Residue lysine 687 forms a Glycyl lysine isopeptide (Lys-Gly) (interchain with G-Cter in ubiquitin) linkage. Serine 699 and serine 711 each carry phosphoserine. Threonine 716 is subject to Phosphothreonine. Serine 736, serine 767, serine 790, serine 795, and serine 813 each carry phosphoserine. The chain crosses the membrane as a helical span at residues 859-879 (LMFVLIWCLVVFLAEVAASLV). One can recognise an ABC transmembrane type-1 2 domain in the interval 859–1155 (LMFVLIWCLV…AVNSSIDVDS (297 aa)). The Extracellular segment spans residues 880 to 918 (VLCLFPKILFQDKGNSTKSANNSYAVIITSTSSYYIFYI). Asparagine 894 and asparagine 900 each carry an N-linked (GlcNAc...) asparagine glycan. A discontinuously helical membrane pass occupies residues 919-939 (YVGVADTLLALGLFRGLPLVH). The Cytoplasmic portion of the chain corresponds to 940-990 (TLITVSKTLHHKMLQSVLQAPMSTLNTLKTGGILNRFSKDIAVLDDLLPLT). A helical membrane pass occupies residues 991–1011 (IFDFVQLLLIVIGAVVVVSVL). Topologically, residues 1012 to 1013 (QP) are extracellular. The helical transmembrane segment at 1014–1034 (YIFLATVPVIAAFILLRAYFL) threads the bilayer. The Cytoplasmic segment spans residues 1035-1095 (HTSQQLKQLE…TANWFLYLST (61 aa)). A helical transmembrane segment spans residues 1096-1116 (LRWFQMRIEMIFVIFFIAVTF). Over 1117–1130 (ISILTTGEGEGRVG) the chain is Extracellular. A helical membrane pass occupies residues 1131–1151 (IILTLAMNIMGTLQWAVNSSI). Residues 1152 to 1481 (DVDSLMRSVS…TEEEVQETKI (330 aa)) lie on the Cytoplasmic side of the membrane. An ABC transporter 2 domain is found at 1211–1444 (MTVKDLTAKY…KSLFRQAISP (234 aa)). ATP is bound by residues tyrosine 1220 and 1245–1252 (GRTGSGKS). Residues 1387–1481 (RTLKQAFADC…TEEEVQETKI (95 aa)) are interaction with GORASP2. Cysteine 1396 carries the S-palmitoyl cysteine lipid modification. The tract at residues 1452 to 1481 (PQRNSSRQKSRSNIAALKEETEEEVQETKI) is disordered. Over residues 1453 to 1464 (QRNSSRQKSRSN) the composition is skewed to low complexity. Position 1457 is a phosphoserine (serine 1457). Positions 1471-1481 (ETEEEVQETKI) are enriched in acidic residues. A PDZ-binding motif is present at residues 1479 to 1481 (TKI).

Belongs to the ABC transporter superfamily. ABCC family. CFTR transporter (TC 3.A.1.202) subfamily. In terms of assembly, monomer; does not require oligomerization for channel activity. May form oligomers in the membrane. Interacts with SLC26A3, SLC26A6 and NHERF1. Interacts with SHANK2. Interacts with MYO6. Interacts (via C-terminus) with GOPC (via PDZ domain); this promotes CFTR internalization and thereby decreases channel activity. Interacts with SLC4A7 through NHERF1. Found in a complex with MYO5B and RAB11A. Interacts with ANO1. Interacts with SLC26A8. Interacts with AHCYL1; the interaction increases CFTR activity. Interacts with CSE1L. The core-glycosylated form interacts with GORASP2 (via PDZ GRASP-type 1 domain) in respone to ER stress. Interacts with MARCHF2; the interaction leads to CFTR ubiqtuitination and degradation. Interacts with ADGRG2. N-glycosylated. Post-translationally, phosphorylated; cAMP treatment promotes phosphorylation and activates the channel. Dephosphorylation decreases the ATPase activity (in vitro). Phosphorylation at PKA sites activates the channel. Phosphorylation at PKC sites enhances the response to phosphorylation by PKA. Phosphorylated by AMPK; this inhibits channel activity. In terms of processing, ubiquitinated, leading to its degradation in the lysosome. Deubiquitination by USP10 in early endosomes enhances its endocytic recycling to the cell membrane. Ubiquitinated by RNF185 during ER stress. Ubiquitinated by MARCHF2.

The protein localises to the apical cell membrane. It is found in the early endosome membrane. It localises to the cell membrane. The protein resides in the recycling endosome membrane. Its subcellular location is the endoplasmic reticulum membrane. The protein localises to the nucleus. It catalyses the reaction ATP + H2O + closed Cl(-) channel = ADP + phosphate + open Cl(-) channel.. The enzyme catalyses chloride(in) = chloride(out). It carries out the reaction hydrogencarbonate(in) = hydrogencarbonate(out). The catalysed reaction is ATP + H2O = ADP + phosphate + H(+). Its function is as follows. Epithelial ion channel that plays an important role in the regulation of epithelial ion and water transport and fluid homeostasis. Mediates the transport of chloride ions across the cell membrane. Possesses an intrinsic ATPase activity and utilizes ATP to gate its channel; the passive flow of anions through the channel is gated by cycles of ATP binding and hydrolysis by the ATP-binding domains. The ion channel is also permeable to HCO(3)(-); selectivity depends on the extracellular chloride concentration. Exerts its function also by modulating the activity of other ion channels and transporters. Contributes to the regulation of the pH and the ion content of the epithelial fluid layer. Modulates the activity of the epithelial sodium channel (ENaC) complex, in part by regulating the cell surface expression of the ENaC complex. May regulate bicarbonate secretion and salvage in epithelial cells by regulating the transporter SLC4A7. Can inhibit the chloride channel activity of ANO1. Plays a role in the chloride and bicarbonate homeostasis during sperm epididymal maturation and capacitation. The sequence is that of Cystic fibrosis transmembrane conductance regulator from Muntiacus reevesi (Reeves' muntjac).